Reading from the N-terminus, the 133-residue chain is Transmembrane protein 60 (133 aa).

A run of 4 helical transmembrane segments spans residues 5–25, 35–55, 78–98, and 110–130; these read LAQRVLLTWLFTLLFLIMLVL, WFLIFIPVWIFDTILLVLLIV, AWYLIAMLLKLAFCLALCAKL, and FIPLWALLAGALTELGYNVFF.

The protein resides in the membrane. The protein is Transmembrane protein 60 (TMEM60) of Homo sapiens (Human).